The following is a 236-amino-acid chain: Lipoarabinomannan carrier protein LprG (236 aa).

The N-terminal stretch at 1–26 (MRTPRRHCRRIAVLAAVSIAATVVAG) is a signal peptide. Cysteine 27 carries N-palmitoyl cysteine lipidation. Cysteine 27 carries the S-diacylglycerol cysteine lipid modification.

It belongs to the LppX/LprAFG lipoprotein family. Post-translationally, modified by Lgt on Cys-27 with an S-linked diacylglyceral, signal peptide is removed by LspA, Cys-27 is further modifed with a fatty acid on its amino group by Lnt yielding a triacylated protein.

The protein resides in the cell inner membrane. Its subcellular location is the secreted. It is found in the cell wall. Helps membrane protein Mb1445c (P55) transport triacylglycerides (TAG) across the inner cell membrane into the periplasm and probably ultimately to the outer membrane. Binds TAG in its hydrophobic cavity and transfers it between lipid bilayers. TAG probably regulates lipid metabolism and growth regulation and plays a structural role in the outer membrane. Binds di- and triacylated phosphatidyl-myo-inositol mannosides (PIMs), and glycolipid lipoglycan modulins lipoarabinomannan (LAM) and lipomannan (LM), facilitating their recognition by TLR2. Required for activity of drug efflux transporter Mb1445c. Required, probably with Mb1445c, for normal surface localization of LAM. In terms of biological role, constitutes a host TLR2 agonist (toll-like receptor). The protein is Lipoarabinomannan carrier protein LprG of Mycobacterium bovis (strain ATCC BAA-935 / AF2122/97).